Reading from the N-terminus, the 225-residue chain is Germin-like protein 3-8 (225 aa).

The signal sequence occupies residues 1–25; it reads MSRTSSAPLLVLSAALAVLASTCIA. Cysteine 34 and cysteine 57 are oxidised to a cystine. Residues 71 to 219 enclose the Cupin type-1 domain; the sequence is AGLAVASDTD…SFQVDAKIIK (149 aa). An N-linked (GlcNAc...) asparagine glycan is attached at asparagine 86. Mn(2+) is bound by residues histidine 119, histidine 121, glutamate 126, and histidine 165.

It belongs to the germin family. In terms of assembly, oligomer (believed to be a pentamer but probably hexamer).

It localises to the secreted. It is found in the extracellular space. Its subcellular location is the apoplast. Its function is as follows. May play a role in plant defense. Probably has no oxalate oxidase activity even if the active site is conserved. The sequence is that of Germin-like protein 3-8 from Oryza sativa subsp. japonica (Rice).